A 248-amino-acid chain; its full sequence is Regulator of G-protein signaling 7-binding protein A (248 aa).

The interval 1–32 is disordered; that stretch reads MSSAPNGRKNRPRTAGTIFQIGGKAPSRESER. 2 S-palmitoyl cysteine lipidation sites follow: Cys243 and Cys244.

The protein belongs to the RGS7BP/RGS9BP family. In terms of processing, palmitoylated. Undergoes rapid palmitoylation turnover. Palmitoylation regulates the cell membrane and nuclear shuttling and the regulation of GPCR signaling. Upon depalmitoylation, it is targeted from the plasma membrane into the nucleus. GPCR signaling inhibits depalmitoylation and promotes localization to the plasma membrane.

It localises to the nucleus. Its subcellular location is the cytoplasm. It is found in the cell membrane. Regulator of G protein-coupled receptor (GPCR) signaling. Regulatory subunit of the R7-Gbeta5 complexes that acts by controlling the subcellular location of the R7-Gbeta5 complexes. When palmitoylated, it targets the R7-Gbeta5 complexes to the plasma membrane, leading to inhibit G protein alpha subunits. When it is unpalmitoylated, the R7-Gbeta5 complexes undergo a nuclear/cytoplasmic shuttling. The protein is Regulator of G-protein signaling 7-binding protein A (rgs7bpa) of Danio rerio (Zebrafish).